A 196-amino-acid polypeptide reads, in one-letter code: Probable calcium-binding protein CML32 (196 aa).

EF-hand domains lie at 30–65, 121–156, and 159–194; these read LNAV…LGLV, DEEE…LGLP, and GSLA…ITVW. Ca(2+) is bound by residues aspartate 43, asparagine 45, aspartate 47, glutamate 49, glutamate 54, aspartate 134, aspartate 136, aspartate 138, glutamate 145, aspartate 172, asparagine 174, aspartate 176, arginine 178, and glutamate 183.

Its function is as follows. Potential calcium sensor. This chain is Probable calcium-binding protein CML32 (CML32), found in Oryza sativa subsp. japonica (Rice).